A 149-amino-acid polypeptide reads, in one-letter code: Ribonuclease H (149 aa).

Residues 1–141 (MKTVTLFSDG…CDTMAREKAT (141 aa)) form the RNase H type-1 domain. Residues aspartate 9, glutamate 47, aspartate 69, and aspartate 133 each contribute to the Mg(2+) site.

This sequence belongs to the RNase H family. As to quaternary structure, monomer. Requires Mg(2+) as cofactor.

Its subcellular location is the cytoplasm. It carries out the reaction Endonucleolytic cleavage to 5'-phosphomonoester.. Functionally, endonuclease that specifically degrades the RNA of RNA-DNA hybrids. This is Ribonuclease H from Campylobacter curvus (strain 525.92).